Reading from the N-terminus, the 428-residue chain is Enolase (428 aa).

(2R)-2-phosphoglycerate is bound at residue Gln162. The active-site Proton donor is Glu204. 3 residues coordinate Mg(2+): Asp241, Glu282, and Asp309. Residues Lys334, Arg363, Ser364, and Lys385 each contribute to the (2R)-2-phosphoglycerate site. The active-site Proton acceptor is Lys334.

The protein belongs to the enolase family. Requires Mg(2+) as cofactor.

Its subcellular location is the cytoplasm. The protein localises to the secreted. The protein resides in the cell surface. It catalyses the reaction (2R)-2-phosphoglycerate = phosphoenolpyruvate + H2O. Its pathway is carbohydrate degradation; glycolysis; pyruvate from D-glyceraldehyde 3-phosphate: step 4/5. Its function is as follows. Catalyzes the reversible conversion of 2-phosphoglycerate (2-PG) into phosphoenolpyruvate (PEP). It is essential for the degradation of carbohydrates via glycolysis. The protein is Enolase of Mycobacterium marinum (strain ATCC BAA-535 / M).